We begin with the raw amino-acid sequence, 300 residues long: Acetaldehyde dehydrogenase 3 (300 aa).

11–14 (SGNI) lines the NAD(+) pocket. Cysteine 126 acts as the Acyl-thioester intermediate in catalysis. NAD(+)-binding positions include 157–165 (SAGPGTRAN) and asparagine 276.

Belongs to the acetaldehyde dehydrogenase family.

The catalysed reaction is acetaldehyde + NAD(+) + CoA = acetyl-CoA + NADH + H(+). The sequence is that of Acetaldehyde dehydrogenase 3 from Rhodococcus opacus (strain B4).